Reading from the N-terminus, the 111-residue chain is Probable 4-amino-4-deoxy-L-arabinose-phosphoundecaprenol flippase subunit ArnE (111 aa).

At Met-1–His-35 the chain is on the cytoplasmic side. A helical transmembrane segment spans residues Ile-36–Leu-56. In terms of domain architecture, EamA spans Leu-40 to Ser-109. Residues Val-57–Asn-60 are Periplasmic-facing. The chain crosses the membrane as a helical span at residues Val-61 to Ala-81. Residues Val-82–Glu-87 lie on the Cytoplasmic side of the membrane. Residues Pro-88–Gly-108 form a helical membrane-spanning segment. At Ser-109–Val-111 the chain is on the periplasmic side.

This sequence belongs to the ArnE family. As to quaternary structure, heterodimer of ArnE and ArnF.

It localises to the cell inner membrane. The protein operates within bacterial outer membrane biogenesis; lipopolysaccharide biosynthesis. Its function is as follows. Translocates 4-amino-4-deoxy-L-arabinose-phosphoundecaprenol (alpha-L-Ara4N-phosphoundecaprenol) from the cytoplasmic to the periplasmic side of the inner membrane. In Escherichia coli (strain UTI89 / UPEC), this protein is Probable 4-amino-4-deoxy-L-arabinose-phosphoundecaprenol flippase subunit ArnE.